The following is a 670-amino-acid chain: tRNA 5-methylaminomethyl-2-thiouridine biosynthesis bifunctional protein MnmC (670 aa).

Residues M1 to I242 are tRNA (mnm(5)s(2)U34)-methyltransferase. Positions I269–E670 are FAD-dependent cmnm(5)s(2)U34 oxidoreductase.

This sequence in the N-terminal section; belongs to the methyltransferase superfamily. tRNA (mnm(5)s(2)U34)-methyltransferase family. It in the C-terminal section; belongs to the DAO family. Requires FAD as cofactor.

It is found in the cytoplasm. It catalyses the reaction 5-aminomethyl-2-thiouridine(34) in tRNA + S-adenosyl-L-methionine = 5-methylaminomethyl-2-thiouridine(34) in tRNA + S-adenosyl-L-homocysteine + H(+). Catalyzes the last two steps in the biosynthesis of 5-methylaminomethyl-2-thiouridine (mnm(5)s(2)U) at the wobble position (U34) in tRNA. Catalyzes the FAD-dependent demodification of cmnm(5)s(2)U34 to nm(5)s(2)U34, followed by the transfer of a methyl group from S-adenosyl-L-methionine to nm(5)s(2)U34, to form mnm(5)s(2)U34. This Haemophilus influenzae (strain ATCC 51907 / DSM 11121 / KW20 / Rd) protein is tRNA 5-methylaminomethyl-2-thiouridine biosynthesis bifunctional protein MnmC.